The chain runs to 126 residues: Glycine cleavage system H protein (126 aa).

In terms of domain architecture, Lipoyl-binding spans 22–104; sequence IATVGITAFA…YGRGWLFKVE (83 aa). An N6-lipoyllysine modification is found at K63.

It belongs to the GcvH family. The glycine cleavage system is composed of four proteins: P, T, L and H. Requires (R)-lipoate as cofactor.

Functionally, the glycine cleavage system catalyzes the degradation of glycine. The H protein shuttles the methylamine group of glycine from the P protein to the T protein. The chain is Glycine cleavage system H protein from Thermobifida fusca (strain YX).